The sequence spans 1034 residues: MERARRLAILGRLVSQTKHNPSISSPALCSPSRYVSSLSPYVCSGTNVRSDRNLNGFGSQVRTISVEALKPSDTFPRRHNSATPEEQTKMAEFVGFPNLDSLIDATVPKSIRLDSMKYSKFDEGLTESQMIAHMQDLASKNKIFKSFIGMGYYNTSVPTVILRNIMENPGWYTQYTPYQAEIAQGRLESLLNFQTMITDLTGLPMSNASLLDEGTAAAEAMAMCNNIQKGKKKTFIIASNCHPQTIDICKTRADGFDLKVVTSDLKDFDYSSGDVCGVLVQYPGTEGELLDYSEFIKNAHANGVKVVMASDLLALTILKPPGELGADIVVGSAQRFGVPMGYGGPHAAFLATSQEYKRMMPGRIIGVSVDSSGKPALRMAMQTREQHIRRDKATSNICTAQALLANMAAMFGVYHGPEGLKTIAKRVHGLAGTFASGLKKLGTVQVQDLPFFDTVKVTCADSKAIAEEAYKHKMNLRIVDKNTITVAFDETTTIEDVDTLFKVFALGKPVTFTAASIAPEVQDAIPSGLVRETPYLTHPIFNMYHTEHELLRYISKLQSKDLSLCHSMIPLGSCTMKLNATTEMMPVTWPAFADIHPFAPTEQAQGYQEMFKNLGDLLCTITGFDSFSLQPNAGAAGEYAGLMVIRAYHMARGDHHRNVCIIPVSAHGTNPASAAMCGMKIITVGTDSKGNINIEELRKAAEANKENLSALMVTYPSTHGVYEEGIDEICKIIHDNGGQVYMDGANMNAQVGLTSPGWIGADVCHLNLHKTFCIPHGGGGPGMGPIGVKKHLAPYLPSHPVVPTGGIPAPEQSQPLGTIAAAPWGSALILPISYTYIAMMGSQGITNASKIAILNANYMAKRLENHYPILFRGVNGTVAHEFIVDLRPLKTTAGIEPEDVAKRLIDYGFHGPTMSWPVPGTLMIEPTESESKAELDRFCDALISIRQEIAEIEKGNVDFNNNVIKGAPHPPQLLMADKWTKPYSREYAAYPAPWLRAAKFWPTTCRVDNVYGDRNLICTLQPPQEYEEKAEATA.

Residues 1–63 constitute a mitochondrion transit peptide; sequence MERARRLAIL…LNGFGSQVRT (63 aa). The residue at position 770 (K770) is an N6-(pyridoxal phosphate)lysine.

Belongs to the GcvP family. As to quaternary structure, homodimer. The glycine cleavage system is composed of four proteins: P, T, L and H. Pyridoxal 5'-phosphate serves as cofactor.

It localises to the mitochondrion. It carries out the reaction N(6)-[(R)-lipoyl]-L-lysyl-[glycine-cleavage complex H protein] + glycine + H(+) = N(6)-[(R)-S(8)-aminomethyldihydrolipoyl]-L-lysyl-[glycine-cleavage complex H protein] + CO2. Its function is as follows. The glycine cleavage system catalyzes the degradation of glycine. The P protein binds the alpha-amino group of glycine through its pyridoxal phosphate cofactor; CO(2) is released and the remaining methylamine moiety is then transferred to the lipoamide cofactor of the H protein. The polypeptide is Glycine dehydrogenase (decarboxylating) B, mitochondrial (GDCSPB) (Flaveria pringlei).